The chain runs to 433 residues: Enolase (433 aa).

Glutamine 167 contacts (2R)-2-phosphoglycerate. Catalysis depends on glutamate 209, which acts as the Proton donor. Residues aspartate 246, glutamate 291, and aspartate 318 each contribute to the Mg(2+) site. The (2R)-2-phosphoglycerate site is built by lysine 343, arginine 372, serine 373, and lysine 394. Catalysis depends on lysine 343, which acts as the Proton acceptor.

This sequence belongs to the enolase family. In terms of assembly, component of the RNA degradosome, a multiprotein complex involved in RNA processing and mRNA degradation. Mg(2+) serves as cofactor.

The protein resides in the cytoplasm. It is found in the secreted. It localises to the cell surface. The catalysed reaction is (2R)-2-phosphoglycerate = phosphoenolpyruvate + H2O. Its pathway is carbohydrate degradation; glycolysis; pyruvate from D-glyceraldehyde 3-phosphate: step 4/5. Functionally, catalyzes the reversible conversion of 2-phosphoglycerate (2-PG) into phosphoenolpyruvate (PEP). It is essential for the degradation of carbohydrates via glycolysis. This is Enolase from Actinobacillus succinogenes (strain ATCC 55618 / DSM 22257 / CCUG 43843 / 130Z).